We begin with the raw amino-acid sequence, 116 residues long: Large ribosomal subunit protein bL19 (116 aa).

This sequence belongs to the bacterial ribosomal protein bL19 family.

In terms of biological role, this protein is located at the 30S-50S ribosomal subunit interface and may play a role in the structure and function of the aminoacyl-tRNA binding site. The polypeptide is Large ribosomal subunit protein bL19 (Chloroflexus aurantiacus (strain ATCC 29366 / DSM 635 / J-10-fl)).